A 151-amino-acid polypeptide reads, in one-letter code: Ribosome maturation factor RimP (151 aa).

This sequence belongs to the RimP family.

It localises to the cytoplasm. Its function is as follows. Required for maturation of 30S ribosomal subunits. This is Ribosome maturation factor RimP from Pseudoalteromonas translucida (strain TAC 125).